Here is a 2376-residue protein sequence, read N- to C-terminus: Cell morphogenesis protein PAG1 (2376 aa).

Residues 1-30 (MASRFTFPPQRDQGIGFTFPPTNKAEGSSN) are disordered. Phosphoserine is present on S141. The interval 275–294 (SSSNTTSKYKHNNNTNNLPG) is disordered. S1144 carries the phosphoserine modification. Position 2264 is a phosphothreonine (T2264). Residues S2267 and S2355 each carry the phosphoserine modification.

To S.pombe mor2. In terms of assembly, associates with CBK1.

In terms of biological role, seems to play a role in cell morphogenesis. The chain is Cell morphogenesis protein PAG1 (TAO3) from Saccharomyces cerevisiae (strain ATCC 204508 / S288c) (Baker's yeast).